A 250-amino-acid polypeptide reads, in one-letter code: 3-deoxy-manno-octulosonate cytidylyltransferase (250 aa).

It belongs to the KdsB family.

Its subcellular location is the cytoplasm. It carries out the reaction 3-deoxy-alpha-D-manno-oct-2-ulosonate + CTP = CMP-3-deoxy-beta-D-manno-octulosonate + diphosphate. It functions in the pathway nucleotide-sugar biosynthesis; CMP-3-deoxy-D-manno-octulosonate biosynthesis; CMP-3-deoxy-D-manno-octulosonate from 3-deoxy-D-manno-octulosonate and CTP: step 1/1. Its pathway is bacterial outer membrane biogenesis; lipopolysaccharide biosynthesis. In terms of biological role, activates KDO (a required 8-carbon sugar) for incorporation into bacterial lipopolysaccharide in Gram-negative bacteria. The chain is 3-deoxy-manno-octulosonate cytidylyltransferase from Pectobacterium carotovorum subsp. carotovorum (strain PC1).